Reading from the N-terminus, the 540-residue chain is Chaperonin GroEL (540 aa).

Residues 29–32, 86–90, G413, 476–478, and D492 each bind ATP; these read TIGP, DGTTT, and NAA. The tract at residues 520–540 is disordered; it reads DKPEPESNNQMPATPGMGGMM.

It belongs to the chaperonin (HSP60) family. As to quaternary structure, forms a cylinder of 14 subunits composed of two heptameric rings stacked back-to-back. Interacts with the co-chaperonin GroES.

Its subcellular location is the cytoplasm. It catalyses the reaction ATP + H2O + a folded polypeptide = ADP + phosphate + an unfolded polypeptide.. Together with its co-chaperonin GroES, plays an essential role in assisting protein folding. The GroEL-GroES system forms a nano-cage that allows encapsulation of the non-native substrate proteins and provides a physical environment optimized to promote and accelerate protein folding. The chain is Chaperonin GroEL from Ligilactobacillus salivarius (strain UCC118) (Lactobacillus salivarius).